The following is a 708-amino-acid chain: G-box-binding factor (708 aa).

2 disordered regions span residues 1-29 (MLST…GSDL) and 123-339 (QQAQ…QTIP). Composition is skewed to low complexity over residues 11–21 (SSSSSSSSSPS), 123–219 (QQAQ…QHHQ), and 227–316 (SQPQ…SPST). Residues 324–333 (ETSNSEKKDS) are compositionally biased toward basic and acidic residues. 2 consecutive repeat copies span residues 339-368 (PKCT…AFTP) and 481-510 (PPCP…PFTP). Residues 511-604 (VGAGLSPSSS…PTYSPNPSLP (94 aa)) form a disordered region. Over residues 516–590 (SPSSSPSSPK…SSISQSPLQL (75 aa)) the composition is skewed to low complexity. Over residues 591-600 (NYQTPTYSPN) the composition is skewed to polar residues.

Its subcellular location is the nucleus. Functionally, cAMP-responsive transcriptional activator regulating late gene expression. Essential component of the developmental switch between early and late development. Binds to a number of CA/GT-rich gene regulatory elements. In Dictyostelium discoideum (Social amoeba), this protein is G-box-binding factor (gbfA).